Reading from the N-terminus, the 593-residue chain is Sodium-independent sulfate anion transporter (593 aa).

Topologically, residues 1 to 34 are extracellular; the sequence is MAPDTCCCSATALRRRLPVLAWVPDYSLQWLRLD. The chain crosses the membrane as a helical span at residues 35 to 55; the sequence is FIAGLSVGLTVIPQALAYAEV. Residue alanine 56 is a topological domain, cytoplasmic. A helical membrane pass occupies residues 57-77; sequence GLPPQYGLYSAFMGCFVYFFL. Over 78–82 the chain is Extracellular; that stretch reads GTSRD. A helical membrane pass occupies residues 83-100; the sequence is VTLGPTAIMSLLVSFYTF. Over 101 to 106 the chain is Cytoplasmic; that stretch reads REPAYA. The helical transmembrane segment at 107–127 threads the bilayer; it reads VLLAFLSGCIQLAMGLLHLGF. Residues 128 to 176 lie on the Extracellular side of the membrane; the sequence is LLDFISCPVIKGFTSAASITIGFGQIKNLLGLQKIPRQFFLQVYHTFLH. Residues 177-197 form a helical membrane-spanning segment; the sequence is IGETRVGDAVLGLASMLLLLV. Topologically, residues 198–233 are cytoplasmic; it reads LKCMREHMPPPHPEMPLAVKFSRGLVWTVTTARNAL. Residues 234–254 traverse the membrane as a helical segment; the sequence is VVSSAALIAYAFEVTGSHPFV. Over 255–287 the chain is Extracellular; that stretch reads LTGKIAEGLPPVRIPPFSVTRDNKTISFSEMVQ. A helical transmembrane segment spans residues 288–308; it reads DMGAGLAVVPLMGLLESIAVA. The Cytoplasmic portion of the chain corresponds to 309 to 324; the sequence is KSFASQNNYRIDANQE. A helical membrane pass occupies residues 325 to 345; sequence LLAIGLTNVLGSLVSSYPVTG. Over 346–361 the chain is Extracellular; that stretch reads SFGRTAVNAQTGVCTP. Residues 362–382 form a helical membrane-spanning segment; sequence AGGLVTGALVLLSLNYLTSLF. A topological domain (cytoplasmic) is located at residue serine 383. The chain crosses the membrane as a helical span at residues 384–404; the sequence is YIPKSALAAVIITAVTPLFDV. The Extracellular segment spans residues 405–417; sequence KIFRSLWRVQRLD. The helical transmembrane segment at 418–438 threads the bilayer; it reads LLPLCVTFLLSFWEIQYGILA. Residues 439–593 lie on the Cytoplasmic side of the membrane; it reads GSLVSLLILL…SSLLKSPSGP (155 aa). One can recognise an STAS domain in the interval 453 to 566; that stretch reads RPKTQVSEGQ…EEAEKFLQQE (114 aa). The interval 564 to 593 is disordered; it reads QQEPGTEPNSIHEDAVPEQRSSLLKSPSGP. Over residues 582–593 the composition is skewed to polar residues; sequence QRSSLLKSPSGP.

Belongs to the SLC26A/SulP transporter (TC 2.A.53) family. In terms of tissue distribution, abundantly expressed in the cerebellum, with a predominant expression in Purkinje cells (at protein level). As to expression, predominantly expressed in the kidney and brain. In the kidney localizes in collecting duct intercalated cells (at protein level). Predominantly expressed in the brain with lower levels in the kidney.

The protein localises to the cell membrane. The protein resides in the lysosome membrane. It localises to the apical cell membrane. Its subcellular location is the basolateral cell membrane. It carries out the reaction hydrogencarbonate(in) + chloride(out) = hydrogencarbonate(out) + chloride(in). The catalysed reaction is sulfate(in) + H(+)(in) = sulfate(out) + H(+)(out). The enzyme catalyses oxalate(in) + chloride(out) = oxalate(out) + chloride(in). In terms of biological role, sodium-independent anion exchanger mediating bicarbonate, chloride, sulfate and oxalate transport. Exhibits sodium-independent sulfate anion transporter activity that may cooperate with SLC26A2 to mediate DIDS-sensitive sulfate uptake into high endothelial venules endothelial cells (HEVEC). In the kidney, mediates chloride-bicarbonate exchange, facilitating V-ATPase-mediated acid secretion. May function as a chloride channel, playing an important role in moderating chloride homeostasis and neuronal activity in the cerebellum. The sequence is that of Sodium-independent sulfate anion transporter from Mus musculus (Mouse).